Reading from the N-terminus, the 247-residue chain is Ubiquinone biosynthesis O-methyltransferase (247 aa).

Residues Arg-41, Gly-72, Asp-93, and Met-136 each contribute to the S-adenosyl-L-methionine site.

Belongs to the methyltransferase superfamily. UbiG/COQ3 family.

It carries out the reaction a 3-demethylubiquinol + S-adenosyl-L-methionine = a ubiquinol + S-adenosyl-L-homocysteine + H(+). The catalysed reaction is a 3-(all-trans-polyprenyl)benzene-1,2-diol + S-adenosyl-L-methionine = a 2-methoxy-6-(all-trans-polyprenyl)phenol + S-adenosyl-L-homocysteine + H(+). It functions in the pathway cofactor biosynthesis; ubiquinone biosynthesis. O-methyltransferase that catalyzes the 2 O-methylation steps in the ubiquinone biosynthetic pathway. The protein is Ubiquinone biosynthesis O-methyltransferase of Bartonella quintana (strain Toulouse) (Rochalimaea quintana).